Consider the following 118-residue polypeptide: Aspartate 1-decarboxylase (118 aa).

S25 serves as the catalytic Schiff-base intermediate with substrate; via pyruvic acid. Position 25 is a pyruvic acid (Ser) (S25). T57 serves as a coordination point for substrate. The active-site Proton donor is Y58. 73-75 (GAA) contributes to the substrate binding site.

The protein belongs to the PanD family. Heterooctamer of four alpha and four beta subunits. It depends on pyruvate as a cofactor. Is synthesized initially as an inactive proenzyme, which is activated by self-cleavage at a specific serine bond to produce a beta-subunit with a hydroxyl group at its C-terminus and an alpha-subunit with a pyruvoyl group at its N-terminus.

It is found in the cytoplasm. It carries out the reaction L-aspartate + H(+) = beta-alanine + CO2. It participates in cofactor biosynthesis; (R)-pantothenate biosynthesis; beta-alanine from L-aspartate: step 1/1. Its function is as follows. Catalyzes the pyruvoyl-dependent decarboxylation of aspartate to produce beta-alanine. This is Aspartate 1-decarboxylase from Phenylobacterium zucineum (strain HLK1).